Consider the following 153-residue polypeptide: Cytochrome c-type biogenesis protein CcmE (153 aa).

At M1–R8 the chain is on the cytoplasmic side. A helical; Signal-anchor for type II membrane protein transmembrane segment spans residues L9–A29. The Periplasmic portion of the chain corresponds to L30–R153. Heme contacts are provided by H123 and Y127.

Belongs to the CcmE/CycJ family.

It localises to the cell inner membrane. Heme chaperone required for the biogenesis of c-type cytochromes. Transiently binds heme delivered by CcmC and transfers the heme to apo-cytochromes in a process facilitated by CcmF and CcmH. The sequence is that of Cytochrome c-type biogenesis protein CcmE from Stenotrophomonas maltophilia (strain R551-3).